Reading from the N-terminus, the 266-residue chain is Phosphatidylglycerol--prolipoprotein diacylglyceryl transferase (266 aa).

The next 7 helical transmembrane spans lie at 10–30, 56–76, 92–112, 120–140, 171–191, 199–219, and 233–253; these read VALAIGPLKIHWYGLMYLIGI, LVFWVACGVILGGRLGYVLFY, WKGGMSFHGGLLGVMLAVWWF, FFQLMDFIAPLVPIGLGAGRI, PSQLYQFALEGVALFVILWLF, ASVSGLFVLCYGIFRFVVEFV, and WLTMGQVLCVPMVLAGIALMV. Arg139 provides a ligand contact to a 1,2-diacyl-sn-glycero-3-phospho-(1'-sn-glycerol).

Belongs to the Lgt family.

The protein resides in the cell inner membrane. It catalyses the reaction L-cysteinyl-[prolipoprotein] + a 1,2-diacyl-sn-glycero-3-phospho-(1'-sn-glycerol) = an S-1,2-diacyl-sn-glyceryl-L-cysteinyl-[prolipoprotein] + sn-glycerol 1-phosphate + H(+). The protein operates within protein modification; lipoprotein biosynthesis (diacylglyceryl transfer). Its function is as follows. Catalyzes the transfer of the diacylglyceryl group from phosphatidylglycerol to the sulfhydryl group of the N-terminal cysteine of a prolipoprotein, the first step in the formation of mature lipoproteins. In Pseudomonas aeruginosa (strain LESB58), this protein is Phosphatidylglycerol--prolipoprotein diacylglyceryl transferase.